A 132-amino-acid polypeptide reads, in one-letter code: Small ribosomal subunit protein uS8 (132 aa).

Belongs to the universal ribosomal protein uS8 family. As to quaternary structure, part of the 30S ribosomal subunit. Contacts proteins S5 and S12.

Functionally, one of the primary rRNA binding proteins, it binds directly to 16S rRNA central domain where it helps coordinate assembly of the platform of the 30S subunit. This is Small ribosomal subunit protein uS8 from Agrobacterium fabrum (strain C58 / ATCC 33970) (Agrobacterium tumefaciens (strain C58)).